Consider the following 843-residue polypeptide: Protein translocase subunit SecA 1 (843 aa).

Residues glutamine 91, 109–113 (GEGKT), and aspartate 498 each bind ATP. Basic and acidic residues predominate over residues 799-813 (EAKHVSAEDGKEKVK). The interval 799-826 (EAKHVSAEDGKEKVKPKPIVKGDQVGRN) is disordered. 4 residues coordinate Zn(2+): cysteine 829, cysteine 831, cysteine 840, and histidine 841.

The protein belongs to the SecA family. Monomer and homodimer. Part of the essential Sec protein translocation apparatus which comprises SecA, SecYEG and auxiliary proteins SecDF. Other proteins may also be involved. Zn(2+) is required as a cofactor.

The protein resides in the cell membrane. It localises to the cytoplasm. The enzyme catalyses ATP + H2O + cellular proteinSide 1 = ADP + phosphate + cellular proteinSide 2.. Functionally, part of the Sec protein translocase complex. Interacts with the SecYEG preprotein conducting channel. Has a central role in coupling the hydrolysis of ATP to the transfer of proteins into and across the cell membrane, serving as an ATP-driven molecular motor driving the stepwise translocation of polypeptide chains across the membrane. The chain is Protein translocase subunit SecA 1 from Staphylococcus aureus (strain N315).